A 338-amino-acid polypeptide reads, in one-letter code: HTH-type transcriptional regulator SyrM 1 (338 aa).

The HTH lysR-type domain maps to 35-92 (LDLNTLLALEALLEHRNVTQAARHLGLSQPSVSRALIRLRGVFNDDLLVRGSSGMVPT). A DNA-binding region (H-T-H motif) is located at residues 52-72 (VTQAARHLGLSQPSVSRALIR).

This sequence belongs to the LysR transcriptional regulatory family.

Functionally, transcriptional activator that regulates the expression of genes involved in symbiosis. Among other targets it acts on the nolWBTUV operon. The polypeptide is HTH-type transcriptional regulator SyrM 1 (syrM1) (Sinorhizobium fredii (strain NBRC 101917 / NGR234)).